A 377-amino-acid polypeptide reads, in one-letter code: Tryptophan--tRNA ligase, mitochondrial (377 aa).

ATP-binding positions include Gln21 and 28–31 (HLGN). A 'HIGH' region motif is present at residues 22 to 31 (PTSSALHLGN). Asp181 contributes to the L-tryptophan binding site. ATP contacts are provided by residues 193-195 (GED), 242-246 (KMSKS), and Lys245. Residues 242 to 246 (KMSKS) carry the 'KMSKS' region motif.

Belongs to the class-I aminoacyl-tRNA synthetase family.

The protein resides in the mitochondrion matrix. It catalyses the reaction tRNA(Trp) + L-tryptophan + ATP = L-tryptophyl-tRNA(Trp) + AMP + diphosphate + H(+). The protein is Tryptophan--tRNA ligase, mitochondrial (wars2) of Dictyostelium discoideum (Social amoeba).